Here is a 426-residue protein sequence, read N- to C-terminus: Ubiquitin carboxyl-terminal hydrolase 46 (426 aa).

Glycine 2 is lipidated: N-myristoyl glycine. Residues 27–406 form the USP domain; it reads YGLVNFGNTC…SAYILFYQAR (380 aa). Cysteine 36 serves as the catalytic Nucleophile. The interval 162-181 is disordered; that stretch reads TAGLPRSDEKGTSERNGGIT. Catalysis depends on histidine 342, which acts as the Proton acceptor.

This sequence belongs to the peptidase C19 family. As to quaternary structure, interacts with wdr-20 and wdr-48; the catalytic activity of usp-46 is increased in the presence of both wdr-20 and wdr-48. Interacts with glr-1; the interaction results in deubiquitination of glr-1. Expressed in a number of tissues including the nervous system, pharynx, body wall muscle, vulva muscle and intestine and is detected in many head and ventral cord neurons.

The protein resides in the perikaryon. Its subcellular location is the cytoplasm. The enzyme catalyses Thiol-dependent hydrolysis of ester, thioester, amide, peptide and isopeptide bonds formed by the C-terminal Gly of ubiquitin (a 76-residue protein attached to proteins as an intracellular targeting signal).. Functionally, regulates the abundance of the glr-1 glutamate receptor in the ventral nerve cord by promoting its deubiquitination and preventing its degradation in the lysosome. Contributes to the regulation of embryonic polarity. In Caenorhabditis elegans, this protein is Ubiquitin carboxyl-terminal hydrolase 46 (usp-46).